The sequence spans 415 residues: Serine--tRNA ligase (415 aa).

Residue Thr231–Glu233 coordinates L-serine. Arg262 to Glu264 lines the ATP pocket. Residue Glu285 coordinates L-serine. Residue Glu349–Ser352 coordinates ATP. Residue Ser383 participates in L-serine binding.

The protein belongs to the class-II aminoacyl-tRNA synthetase family. Type-1 seryl-tRNA synthetase subfamily. In terms of assembly, homodimer. The tRNA molecule binds across the dimer.

It is found in the cytoplasm. It catalyses the reaction tRNA(Ser) + L-serine + ATP = L-seryl-tRNA(Ser) + AMP + diphosphate + H(+). The enzyme catalyses tRNA(Sec) + L-serine + ATP = L-seryl-tRNA(Sec) + AMP + diphosphate + H(+). It participates in aminoacyl-tRNA biosynthesis; selenocysteinyl-tRNA(Sec) biosynthesis; L-seryl-tRNA(Sec) from L-serine and tRNA(Sec): step 1/1. Functionally, catalyzes the attachment of serine to tRNA(Ser). Is also able to aminoacylate tRNA(Sec) with serine, to form the misacylated tRNA L-seryl-tRNA(Sec), which will be further converted into selenocysteinyl-tRNA(Sec). This Helicobacter pylori (strain ATCC 700392 / 26695) (Campylobacter pylori) protein is Serine--tRNA ligase.